The chain runs to 580 residues: PTS system fructose-specific EIIB'BC component (580 aa).

PTS EIIB type-2 domains are found at residues 3 to 100 and 124 to 221; these read MKIA…QAAE and KKIV…NAFA. Active-site phosphocysteine intermediate; for EIIB activity residues include C11 and C132. Phosphocysteine; by EIIA occurs at positions 11 and 132. The PTS EIIC type-2 domain maps to 244 to 579; that stretch reads VYKHLMTGVS…KKSAQAKAVA (336 aa). 9 helical membrane passes run 254–274, 292–312, 322–342, 367–387, 408–428, 448–468, 480–500, 507–527, and 537–557; these read HMLP…VFGI, GGSA…FSIA, IGGM…VAGF, ILII…YVVG, NAIL…GGPV, MAAI…ATFI, AGKA…IPFA, VIPA…LFGA, and FVLL…AIAV.

It localises to the cell inner membrane. It catalyses the reaction D-fructose(out) + N(pros)-phospho-L-histidyl-[protein] = D-fructose 1-phosphate(in) + L-histidyl-[protein]. In terms of biological role, the phosphoenolpyruvate-dependent sugar phosphotransferase system (sugar PTS), a major carbohydrate active transport system, catalyzes the phosphorylation of incoming sugar substrates concomitantly with their translocation across the cell membrane. The enzyme II FruAB PTS system is involved in fructose transport. The chain is PTS system fructose-specific EIIB'BC component from Vibrio cholerae serotype O1 (strain ATCC 39315 / El Tor Inaba N16961).